The primary structure comprises 145 residues: D-aminoacyl-tRNA deacylase (145 aa).

Residues Gly137–Pro138 carry the Gly-cisPro motif, important for rejection of L-amino acids motif.

This sequence belongs to the DTD family. Homodimer.

It is found in the cytoplasm. It carries out the reaction glycyl-tRNA(Ala) + H2O = tRNA(Ala) + glycine + H(+). The enzyme catalyses a D-aminoacyl-tRNA + H2O = a tRNA + a D-alpha-amino acid + H(+). Its function is as follows. An aminoacyl-tRNA editing enzyme that deacylates mischarged D-aminoacyl-tRNAs. Also deacylates mischarged glycyl-tRNA(Ala), protecting cells against glycine mischarging by AlaRS. Acts via tRNA-based rather than protein-based catalysis; rejects L-amino acids rather than detecting D-amino acids in the active site. By recycling D-aminoacyl-tRNA to D-amino acids and free tRNA molecules, this enzyme counteracts the toxicity associated with the formation of D-aminoacyl-tRNA entities in vivo and helps enforce protein L-homochirality. The polypeptide is D-aminoacyl-tRNA deacylase (Pseudomonas syringae pv. tomato (strain ATCC BAA-871 / DC3000)).